Here is a 488-residue protein sequence, read N- to C-terminus: Lysine--tRNA ligase (488 aa).

2 residues coordinate Mg(2+): glutamate 397 and glutamate 404.

This sequence belongs to the class-II aminoacyl-tRNA synthetase family. In terms of assembly, homodimer. Mg(2+) serves as cofactor.

The protein localises to the cytoplasm. The catalysed reaction is tRNA(Lys) + L-lysine + ATP = L-lysyl-tRNA(Lys) + AMP + diphosphate. The protein is Lysine--tRNA ligase (lysS) of Mycoplasmopsis fermentans (strain ATCC 19989 / NBRC 14854 / NCTC 10117 / PG18) (Mycoplasma fermentans).